Consider the following 1306-residue polypeptide: MKLEINKFNYNDPIDGINVITMRPPRHSDKINKGKGPFKAFQVIKNIWIVPERYNFTNNTNDLNIPSEPIMEADAIYNPNYLNTPSEKDEFLQGVIKVLERIKSKPEGEKLLELISSSIPLPLVSNGALTLSDNETIAYQENNNIVSNLQANLVIYGPGPDIANNATYGLYSTPISNGEGTLSEVSFSPFYLKPFDESYGNYRSLVNIVNKFVKREFAPDPASTLMHELVHVTHNLYGISNRNFYYNFDTGKIETSRQQNSLIFEELLTFGGIDSKAISSLIIKKIIETAKNNYTTLISERLNTVTVENDLLKYIKNKIPVQGRLGNFKLDTAEFEKKLNTILFVLNESNLAQRFSILVRKHYLKERPIDPIYVNILDDNSYSTLEGFNISSQGSNDFQGQLLESSYFEKIESNALRAFIKICPRNGLLYNAIYRNSKNYLNNIDLEDKKTTSKTNVSYPCSLLNGCIEVENKDLFLISNKDSLNDINLSEEKIKPETTVFFKDKLPPQDITLSNYDFTEANSIPSISQQNILERNEELYEPIRNSLFEIKTIYVDKLTTFHFLEAQNIDESIDSSKIRVELTDSVDEALSNPNKVYSPFKNMSNTINSIETGITSTYIFYQWLRSIVKDFSDETGKIDVIDKSSDTLAIVPYIGPLLNIGNDIRHGDFVGAIELAGITALLEYVPEFTIPILVGLEVIGGELAREQVEAIVNNALDKRDQKWAEVYNITKAQWWGTIHLQINTRLAHTYKALSRQANAIKMNMEFQLANYKGNIDDKAKIKNAISETEILLNKSVEQAMKNTEKFMIKLSNSYLTKEMIPKVQDNLKNFDLETKKTLDKFIKEKEDILGTNLSSSLRRKVSIRLNKNIAFDINDIPFSEFDDLINQYKNEIEDYEVLNLGAEDGKIKDLSGTTSDINIGSDIELADGRENKAIKIKGSENSTIKIAMNKYLRFSATDNFSISFWIKHPKPTNLLNNGIEYTLVENFNQRGWKISIQDSKLIWYLRDHNNSIKIVTPDYIAFNGWNLITITNNRSKGSIVYVNGSKIEEKDISSIWNTEVDDPIIFRLKNNRDTQAFTLLDQFSIYRKELNQNEVVKLYNYYFNSNYIRDIWGNPLQYNKKYYLQTQDKPGKGLIREYWSSFGYDYVILSDSKTITFPNNIRYGALYNGSKVLIKNSKKLDGLVRNKDFIQLEIDGYNMGISADRFNEDTNYIGTTYGTTHDLTTDFEIIQRQEKYRNYCQLKTPYNIFHKSGLMSTETSKPTFHDYRDWVYSSAWYFQNYENLNLRKHTKTNWYFIPKDEGWDED.

His-227 serves as a coordination point for Zn(2+). Residue Glu-228 is part of the active site. Zn(2+) is bound by residues His-231 and Glu-266. Cys-423 and Cys-467 are oxidised to a cystine. The segment at 462–889 is translocation domain (TD); it reads SLLNGCIEVE…EFDDLINQYK (428 aa). The interval 505–555 is belt; not required for channel formation; sequence KLPPQDITLSNYDFTEANSIPSISQQNILERNEELYEPIRNSLFEIKTIYV. The N-terminus of receptor binding domain (N-RBD) stretch occupies residues 890–1103; the sequence is NEIEDYEVLN…EVVKLYNYYF (214 aa). Residues 1104 to 1306 are C-terminus of receptor binding domain (C-RBD); the sequence is NSNYIRDIWG…IPKDEGWDED (203 aa). Residues 1274 to 1277 carry the Host ganglioside-binding motif motif; it reads SAWY.

The protein belongs to the peptidase M27 family. Heterodimer; disulfide-linked heterodimer of a light chain (LC) and heavy chain (HC). Requires Zn(2+) as cofactor. Post-translationally, an interchain disulfide bond is required for toxin stability in an artificial construct with the light chain and translocation domain; which of Cys-461 or Cys-467 forms the disulfide bond with Cys-423 in vivo is unknown.

The protein localises to the secreted. It is found in the host cytoplasm. Its subcellular location is the host cytosol. The protein resides in the host synapse. It localises to the host presynaptic cell membrane. The protein localises to the host cytoplasmic vesicle. It is found in the host secretory vesicle. Its subcellular location is the host synaptic vesicle membrane. It carries out the reaction Limited hydrolysis of proteins of the neuroexocytosis apparatus, synaptobrevins, SNAP25 or syntaxin. No detected action on small molecule substrates.. With respect to regulation, VAMP2 cleavage inhibited by EDTA. Functionally, botulinum toxin causes flaccid paralysis by inhibiting neurotransmitter (acetylcholine) release from the presynaptic membranes of nerve terminals of eukaryotic host skeletal and autonomic nervous system, with frequent heart or respiratory failure. Precursor of botulinum neurotoxin X which has 2 coreceptors; complex polysialylated gangliosides found on neural tissue and specific membrane-anchored proteins found in synaptic vesicles. Receptor proteins are exposed on host presynaptic cell membrane during neurotransmitter release, when the toxin heavy chain (HC) binds to them. Upon synaptic vesicle recycling the toxin is taken up via the endocytic pathway. When the pH of the toxin-containing endosome drops a structural rearrangement occurs so that the N-terminus of HC forms pores that allows the light chain (LC) to translocate into the cytosol. Once in the cytosol the disulfide bond linking the 2 subunits is reduced and LC cleaves its target protein on synaptic vesicles, preventing their fusion with the cytoplasmic membrane and thus neurotransmitter release. Artificially assembled BoNT/X cleaves synaptobrevin-2/VAMP2 and VAMP4 in cultured rat neurons and causes flaccid paralysis in mice. Its function is as follows. Has proteolytic activity. After translocation into the eukaryotic host cytosol, LC hydrolyzes the '66-Arg-|-Ala-67' bond in synaptobrevin-2/VAMP2, and the equivalent bonds in 'Arg-|-Ala' bonds in VAMP1 and VAMP3, thus blocking neurotransmitter release. Has a wider target range than most BoNTs, as it also cleaves the '87-Arg-|-Ser-89' bond in VAMP4, the '40-Arg-|-Ser-41' bond in VAMP5 and the '173-Lys-|-Ser-174' bond in YKT6; whether these are physiologically relevant substrates is unknown. BoNT/X is 10-fold more efficient than BoNT/B and 40-fold more efficient than TeTX on an artificial human VAMP1 substrate. In terms of biological role, responsible for epithelial cell transcytosis, host nerve cell targeting and translocation of light chain (LC) into host cytosol. Composed of 3 subdomains; the translocation domain (TD), and N-terminus and C-terminus of the receptor-binding domain (RBD). The RBD is responsible for the adherence of the toxin to the cell surface. It simultaneously recognizes 2 coreceptors; polysialated gangliosides and an unknown receptor protein in close proximity on host synaptic vesicles. The N-terminus of the TD wraps an extended belt around the perimeter of the LC, protecting Zn(2+) in the active site. The TD inserts into synaptic vesicle membrane to allow translocation into the host cytosol. Protein ligation of the RBD to the rest of the toxin (creates an artificial whole toxin) greatly increases VAMP2 degradation, and thus neuron uptake. This is Botulinum neurotoxin type X from Clostridium botulinum.